The primary structure comprises 272 residues: Undecaprenyl-diphosphatase (272 aa).

The next 7 membrane-spanning stretches (helical) occupy residues 39-59 (SGLT…FVYF), 87-107 (WMIV…EQPI), 113-133 (SSPL…GLTD), 145-165 (ITLG…VPGV), 188-208 (FSFL…GLHL), 220-240 (PMLV…AFLL), and 251-271 (FVWY…VGLL).

This sequence belongs to the UppP family.

The protein localises to the cell inner membrane. It carries out the reaction di-trans,octa-cis-undecaprenyl diphosphate + H2O = di-trans,octa-cis-undecaprenyl phosphate + phosphate + H(+). In terms of biological role, catalyzes the dephosphorylation of undecaprenyl diphosphate (UPP). Confers resistance to bacitracin. This Trichlorobacter lovleyi (strain ATCC BAA-1151 / DSM 17278 / SZ) (Geobacter lovleyi) protein is Undecaprenyl-diphosphatase.